The chain runs to 525 residues: WD repeat-containing protein JIP5 (525 aa).

WD repeat units lie at residues 28–69 (VFDE…RILN), 121–160 (RHKG…VMKK), 211–251 (HNGD…ESDA), 270–310 (QEDE…LVDQ), and 358–398 (RKHS…DDEE). The interval 396 to 525 (DEEGKINESY…EHGIRKFEGL (130 aa)) is disordered. Residues 410-424 (SDNDNGFDSDADSNS) show a composition bias toward acidic residues. The span at 425-435 (DSESVSSSDVD) shows a compositional bias: low complexity. The span at 463 to 484 (SKDELLAELEKDLQSSDEDSKH) shows a compositional bias: basic and acidic residues. Residues 485 to 501 (YTKRTKSTQPKKLKKQK) are compositionally biased toward basic residues. The segment covering 513-525 (QKHEHGIRKFEGL) has biased composition (basic and acidic residues).

It belongs to the WD repeat WDR55 family.

Its subcellular location is the nucleus. The protein resides in the nucleolus. This chain is WD repeat-containing protein JIP5 (JIP5), found in Kluyveromyces lactis (strain ATCC 8585 / CBS 2359 / DSM 70799 / NBRC 1267 / NRRL Y-1140 / WM37) (Yeast).